Consider the following 1216-residue polypeptide: RAB11-binding protein RELCH (1216 aa).

Disordered regions lie at residues 1 to 73 (MAAM…GLPG) and 135 to 177 (GNFE…QLNR). An N-acetylalanine modification is found at A2. S20 and S22 each carry phosphoserine. Residues 21–31 (DSDEDDDEVAA) show a composition bias toward acidic residues. T32 is modified (phosphothreonine). 2 positions are modified to phosphoserine: S54 and S56. Residues 148-163 (GAPGVPGAAGVGGAGG) are compositionally biased toward gly residues. A phosphoserine mark is found at S180 and S182. T183 carries the phosphothreonine modification. S186 is subject to Phosphoserine. Residues 197 to 231 (NRETDEKVAVLEFELRKAKETIQALRANLTKAAEH) adopt a coiled-coil conformation. The LisH domain maps to 255-287 (EKRALNFLVNEFLLKNNYKLTSITFSDENDDQD). Positions 359 to 397 (VQKLEDKISLLNSEKWSLMEQIRRLKSEMDFLKNEHFAI) form a coiled coil. S385 bears the Phosphoserine mark. A disordered region spans residues 401-477 (CDSVQPPLDQ…SSLSSKKTVH (77 aa)). Positions 411 to 435 (LPHKDSEDSGQHPDVNSSDKGKNTD) are enriched in basic and acidic residues. S453 carries the phosphoserine modification. An interaction with RAB11A and RAB11B region spans residues 497 to 779 (CRMSADSRLG…SSKAKLHGEV (283 aa)). 2 HEAT repeats span residues 601 to 639 (LLPQ…RSSL) and 640 to 679 (VLSM…KYHQ). A Phosphoserine modification is found at S792. The stretch at 1004–1042 (VAPALVTLSSDPEFSVRIATIPAFGTIMETVIQRELLER) is one HEAT 3 repeat. A Phosphoserine modification is found at S1149.

The protein localises to the recycling endosome. The protein resides in the golgi apparatus. It is found in the trans-Golgi network. Regulates intracellular cholesterol distribution from recycling endosomes to the trans-Golgi network through interactions with RAB11 and OSBP. Functions in membrane tethering and promotes OSBP-mediated cholesterol transfer between RAB11-bound recycling endosomes and OSBP-bound Golgi-like membranes. This is RAB11-binding protein RELCH from Homo sapiens (Human).